Reading from the N-terminus, the 274-residue chain is Large ribosomal subunit protein uL2 (274 aa).

Residues 220–259 are disordered; the sequence is VRGAAMNPRDHPHGGGEGRAPRGMSTPKTKWGKPARGVKT. Positions 227–239 are enriched in basic and acidic residues; that stretch reads PRDHPHGGGEGRA. Basic residues predominate over residues 249–259; that stretch reads KWGKPARGVKT.

It belongs to the universal ribosomal protein uL2 family. As to quaternary structure, part of the 50S ribosomal subunit. Forms a bridge to the 30S subunit in the 70S ribosome.

Functionally, one of the primary rRNA binding proteins. Required for association of the 30S and 50S subunits to form the 70S ribosome, for tRNA binding and peptide bond formation. It has been suggested to have peptidyltransferase activity; this is somewhat controversial. Makes several contacts with the 16S rRNA in the 70S ribosome. This chain is Large ribosomal subunit protein uL2, found in Chloroflexus aggregans (strain MD-66 / DSM 9485).